Here is a 597-residue protein sequence, read N- to C-terminus: Adenine deaminase 2 (597 aa).

It belongs to the metallo-dependent hydrolases superfamily. Adenine deaminase family. Mn(2+) is required as a cofactor.

It catalyses the reaction adenine + H2O + H(+) = hypoxanthine + NH4(+). The sequence is that of Adenine deaminase 2 from Agrobacterium fabrum (strain C58 / ATCC 33970) (Agrobacterium tumefaciens (strain C58)).